The primary structure comprises 208 residues: Small ribosomal subunit protein uS4 (208 aa).

In terms of domain architecture, S4 RNA-binding spans 98–159; the sequence is RRLDNVIYRL…KSRTVAVITN (62 aa).

This sequence belongs to the universal ribosomal protein uS4 family. Part of the 30S ribosomal subunit. Contacts protein S5. The interaction surface between S4 and S5 is involved in control of translational fidelity.

In terms of biological role, one of the primary rRNA binding proteins, it binds directly to 16S rRNA where it nucleates assembly of the body of the 30S subunit. Functionally, with S5 and S12 plays an important role in translational accuracy. The polypeptide is Small ribosomal subunit protein uS4 (Desulfatibacillum aliphaticivorans).